Here is a 341-residue protein sequence, read N- to C-terminus: Serine/threonine-protein kinase PDIK1L (341 aa).

One can recognise a Protein kinase domain in the interval 8–334; it reads YDLIREVGRG…LELRLVQIAF (327 aa). ATP contacts are provided by residues 14-22 and Lys-37; that span reads VGRGSYGVV. Catalysis depends on Asp-164, which acts as the Proton acceptor.

This sequence belongs to the protein kinase superfamily. Ser/Thr protein kinase family. As to expression, expressed in liver, kidney, pancreas, spleen, thymus and prostate.

Its subcellular location is the nucleus. It carries out the reaction L-seryl-[protein] + ATP = O-phospho-L-seryl-[protein] + ADP + H(+). It catalyses the reaction L-threonyl-[protein] + ATP = O-phospho-L-threonyl-[protein] + ADP + H(+). The sequence is that of Serine/threonine-protein kinase PDIK1L (PDIK1L) from Homo sapiens (Human).